The chain runs to 205 residues: ATP-dependent Clp protease proteolytic subunit (205 aa).

The Nucleophile role is filled by Ser-109. His-134 is a catalytic residue.

The protein belongs to the peptidase S14 family. As to quaternary structure, fourteen ClpP subunits assemble into 2 heptameric rings which stack back to back to give a disk-like structure with a central cavity, resembling the structure of eukaryotic proteasomes.

It is found in the cytoplasm. The enzyme catalyses Hydrolysis of proteins to small peptides in the presence of ATP and magnesium. alpha-casein is the usual test substrate. In the absence of ATP, only oligopeptides shorter than five residues are hydrolyzed (such as succinyl-Leu-Tyr-|-NHMec, and Leu-Tyr-Leu-|-Tyr-Trp, in which cleavage of the -Tyr-|-Leu- and -Tyr-|-Trp bonds also occurs).. Its function is as follows. Cleaves peptides in various proteins in a process that requires ATP hydrolysis. Has a chymotrypsin-like activity. Plays a major role in the degradation of misfolded proteins. The sequence is that of ATP-dependent Clp protease proteolytic subunit from Baumannia cicadellinicola subsp. Homalodisca coagulata.